The chain runs to 235 residues: 2-C-methyl-D-erythritol 4-phosphate cytidylyltransferase (235 aa).

Belongs to the IspD/TarI cytidylyltransferase family. IspD subfamily.

The enzyme catalyses 2-C-methyl-D-erythritol 4-phosphate + CTP + H(+) = 4-CDP-2-C-methyl-D-erythritol + diphosphate. Its pathway is isoprenoid biosynthesis; isopentenyl diphosphate biosynthesis via DXP pathway; isopentenyl diphosphate from 1-deoxy-D-xylulose 5-phosphate: step 2/6. Functionally, catalyzes the formation of 4-diphosphocytidyl-2-C-methyl-D-erythritol from CTP and 2-C-methyl-D-erythritol 4-phosphate (MEP). The chain is 2-C-methyl-D-erythritol 4-phosphate cytidylyltransferase from Pseudomonas fluorescens (strain Pf0-1).